The following is a 360-amino-acid chain: Photosystem II protein D1 1 (360 aa).

3 helical membrane passes run Tyr-29 to Thr-46, His-118 to Leu-133, and Trp-142 to Ala-156. His-118 contacts chlorophyll a. Residue Tyr-126 participates in pheophytin a binding. Residues Asp-170 and Glu-189 each contribute to the [CaMn4O5] cluster site. The helical transmembrane segment at Phe-197–Leu-218 threads the bilayer. His-198 provides a ligand contact to chlorophyll a. A quinone is bound by residues His-215 and Ser-264 to Phe-265. His-215 serves as a coordination point for Fe cation. Fe cation is bound at residue His-272. Residues Phe-274–Leu-288 form a helical membrane-spanning segment. Positions 332, 333, 342, and 344 each coordinate [CaMn4O5] cluster. Residues Ala-345 to Gly-360 constitute a propeptide that is removed on maturation.

The protein belongs to the reaction center PufL/M/PsbA/D family. PSII is composed of 1 copy each of membrane proteins PsbA, PsbB, PsbC, PsbD, PsbE, PsbF, PsbH, PsbI, PsbJ, PsbK, PsbL, PsbM, PsbT, PsbX, PsbY, PsbZ, Psb30/Ycf12, peripheral proteins PsbO, CyanoQ (PsbQ), PsbU, PsbV and a large number of cofactors. It forms dimeric complexes. It depends on The D1/D2 heterodimer binds P680, chlorophylls that are the primary electron donor of PSII, and subsequent electron acceptors. It shares a non-heme iron and each subunit binds pheophytin, quinone, additional chlorophylls, carotenoids and lipids. D1 provides most of the ligands for the Mn4-Ca-O5 cluster of the oxygen-evolving complex (OEC). There is also a Cl(-1) ion associated with D1 and D2, which is required for oxygen evolution. The PSII complex binds additional chlorophylls, carotenoids and specific lipids. as a cofactor. Tyr-161 forms a radical intermediate that is referred to as redox-active TyrZ, YZ or Y-Z. Post-translationally, C-terminally processed by CtpA; processing is essential to allow assembly of the oxygen-evolving complex and thus photosynthetic growth.

It localises to the cellular thylakoid membrane. The enzyme catalyses 2 a plastoquinone + 4 hnu + 2 H2O = 2 a plastoquinol + O2. Its function is as follows. Photosystem II (PSII) is a light-driven water:plastoquinone oxidoreductase that uses light energy to abstract electrons from H(2)O, generating O(2) and a proton gradient subsequently used for ATP formation. It consists of a core antenna complex that captures photons, and an electron transfer chain that converts photonic excitation into a charge separation. The D1/D2 (PsbA/PsbD) reaction center heterodimer binds P680, the primary electron donor of PSII as well as several subsequent electron acceptors. This chain is Photosystem II protein D1 1, found in Picosynechococcus sp. (strain ATCC 27264 / PCC 7002 / PR-6) (Agmenellum quadruplicatum).